A 71-amino-acid polypeptide reads, in one-letter code: SRY-related protein LG28 (71 aa).

Residues 1–68 (VKRPMNAFMV…KHMADYPDYK (68 aa)) constitute a DNA-binding region (HMG box).

Its subcellular location is the nucleus. In Eublepharis macularius (Leopard gecko), this protein is SRY-related protein LG28.